The following is a 151-amino-acid chain: MTALYIDADACPVKSEAERVATRHRVKMYIVSNGGLRPSQNPLVETVIVPDGPDVADMWIADRCGTGDVVVTGDIPLAAKCIEAGALVLKHNGEALTSANIGNVLASRDLMADLRAADPFRQGGGKSFGKADRSRFLDGLERTLRKAATLG.

This sequence belongs to the UPF0178 family.

This is UPF0178 protein RD1_0321 from Roseobacter denitrificans (strain ATCC 33942 / OCh 114) (Erythrobacter sp. (strain OCh 114)).